Reading from the N-terminus, the 433-residue chain is D-amino acid dehydrogenase (433 aa).

3-17 (VLVLGSGVIGTTSAY) provides a ligand contact to FAD.

It belongs to the DadA oxidoreductase family. The cofactor is FAD.

It carries out the reaction a D-alpha-amino acid + A + H2O = a 2-oxocarboxylate + AH2 + NH4(+). It functions in the pathway amino-acid degradation; D-alanine degradation; NH(3) and pyruvate from D-alanine: step 1/1. Its function is as follows. Oxidative deamination of D-amino acids. The protein is D-amino acid dehydrogenase of Pseudomonas syringae pv. syringae (strain B728a).